The sequence spans 232 residues: Ovalbumin-related protein X (232 aa).

The protein belongs to the serpin family. Ov-serpin subfamily. As to expression, expressed in egg white (at protein level).

This chain is Ovalbumin-related protein X (SERPINB14C), found in Gallus gallus (Chicken).